The sequence spans 326 residues: Serine protease 38 (326 aa).

Positions 1 to 32 are cleaved as a signal peptide; that stretch reads MAAPASVMGPLGPSALGLLLLLLVVAPPRVAA. A propeptide spans 33–59 (activation peptide); sequence LVHRQPENQGISLTGSVACGRPSMEGK. The Peptidase S1 domain maps to 60–293; that stretch reads ILGGVPAPER…FSKWICDNIE (234 aa). Cysteine 85 and cysteine 101 are disulfide-bonded. The Charge relay system role is filled by histidine 100. A glycan (N-linked (GlcNAc...) asparagine) is linked at asparagine 125. Aspartate 150 (charge relay system) is an active-site residue. Cystine bridges form between cysteine 183/cysteine 251, cysteine 214/cysteine 230, and cysteine 241/cysteine 269. Serine 245 serves as the catalytic Charge relay system.

This sequence belongs to the peptidase S1 family.

The protein localises to the secreted. In Homo sapiens (Human), this protein is Serine protease 38 (PRSS38).